Here is a 1173-residue protein sequence, read N- to C-terminus: DNA-directed RNA polymerase subunit beta (1173 aa).

Residues 1–23 (MEGSLLVASSTSNNETANTASTD) form a disordered region. Residues 8–22 (ASSTSNNETANTAST) show a composition bias toward low complexity.

It belongs to the RNA polymerase beta chain family. As to quaternary structure, the RNAP catalytic core consists of 2 alpha, 1 beta, 1 beta' and 1 omega subunit. When a sigma factor is associated with the core the holoenzyme is formed, which can initiate transcription.

The enzyme catalyses RNA(n) + a ribonucleoside 5'-triphosphate = RNA(n+1) + diphosphate. DNA-dependent RNA polymerase catalyzes the transcription of DNA into RNA using the four ribonucleoside triphosphates as substrates. In Paenarthrobacter aurescens (strain TC1), this protein is DNA-directed RNA polymerase subunit beta.